A 287-amino-acid polypeptide reads, in one-letter code: Protease HtpX (287 aa).

Transmembrane regions (helical) follow at residues 4 to 24 (IFLL…VMSI) and 33 to 53 (GGLL…SLAI). His139 contacts Zn(2+). Residue Glu140 is part of the active site. Residue His143 participates in Zn(2+) binding. The next 2 helical transmembrane spans lie at 154–174 (LIQG…AGII) and 195–215 (AVVF…VAYF). Residue Glu220 coordinates Zn(2+).

The protein belongs to the peptidase M48B family. Requires Zn(2+) as cofactor.

It is found in the cell inner membrane. This Shewanella frigidimarina (strain NCIMB 400) protein is Protease HtpX.